A 442-amino-acid polypeptide reads, in one-letter code: D-galactonate dehydratase family member SSLG_02014 (442 aa).

Histidine 161 serves as a coordination point for substrate. Residue tyrosine 197 is the Proton donor/acceptor of the active site. Aspartate 246 lines the Mg(2+) pocket. Histidine 248 serves as the catalytic Proton donor/acceptor. Residues glutamate 272 and glutamate 298 each coordinate Mg(2+). Substrate-binding residues include glutamate 298, arginine 319, histidine 348, aspartate 352, and glutamate 375.

The protein belongs to the mandelate racemase/muconate lactonizing enzyme family. GalD subfamily. The cofactor is Mg(2+).

It catalyses the reaction D-mannonate = 2-dehydro-3-deoxy-D-gluconate + H2O. Has low D-mannonate dehydratase activity (in vitro), suggesting that this is not a physiological substrate and that it has no significant role in D-mannonate degradation in vivo. Has no detectable activity with a panel of 70 other acid sugars (in vitro). The sequence is that of D-galactonate dehydratase family member SSLG_02014 from Streptomyces sp. (strain SPB78).